The sequence spans 1053 residues: Prestalk protein (1053 aa).

The first 18 residues, 1 to 18 (MNKIYLILILFTFVGIIL), serve as a signal peptide directing secretion. One copy of the X-1 repeat lies at 38–60 (NKCTLDKCNNGCCSNTPININDN). A 41 X 24 AA tandem repeats, Cys-rich region spans residues 38–1019 (NKCTLDKCNN…VHTPVDCNDN (982 aa)). The stretch at 61–84 (DECTVDTCNPKTGISHTPVNCDDG) is one X-2 repeat. Residues 85 to 108 (NSCTADSCLCGKGCQHVPIACDDN) form an X-3 repeat. The stretch at 109 to 132 (NACTVDSCSNSTGCCHTPLSCDDN) is one A-1 repeat. The stretch at 133 to 156 (NPCTVDSCSNSTGCCHTPINVDDH) is one A-2 repeat. Residues 157 to 180 (NACTEDKCTQSGGVTHTPIACDDK) form a B-1 repeat. An A-3 repeat occupies 181 to 204 (NACTVDSCSNSTGCCHTPLSCDDN). Residues 205–228 (NACTVDSCSNSTGCVHTPINVDDH) form an A-4 repeat. Residues 229–252 (NACTEDKCTQSGGVTHTPIACDDK) form a B-2 repeat. The A-5 repeat unit spans residues 253 to 276 (NACTADSCSNSTGCCHTPITCDDN). The stretch at 277–300 (NACTVDSCSNSTGCCHTPINVDDN) is one A-6 repeat. The stretch at 301-324 (NACTEDKCTQSGGVTHTPIACDDK) is one B-3 repeat. The stretch at 325–348 (NACTVDSCSNSTGCVHTPLACDDK) is one A-7 repeat. One copy of the A-8 repeat lies at 349-372 (NPCTVDSCSNSTGCCHTPINVDDN). A B-4 repeat occupies 373–396 (NACTEDKCTQSGGVTHTPINCDDN). One copy of the A-9 repeat lies at 397 to 420 (NKCTVDSCSNSTGCCHTPMSCDDN). One copy of the A-10 repeat lies at 421 to 444 (NPCTVDSCSNSTGCVHTPINVDDN). Residues 445 to 468 (NACTEDKCTQNGGVTHTPIACDDK) form a B-5 repeat. Residues 469–492 (NACTVDSCSNSTGCCHTPLKCDDN) form an A-11 repeat. An A-12 repeat occupies 493–516 (NACTVDSCSNSTGCVHTPINVDDN). The B-6 repeat unit spans residues 517–540 (NACTEDKCTQSGGVTHTPISCDDK). One copy of the A-13 repeat lies at 541–564 (NPCTIDSCSNSTGCVHTPMSCDDR). An X-4 repeat occupies 565 to 588 (NPCTSDFCSWEKGCQHVALSCNDF). The stretch at 589 to 612 (NACTMDSCSNSTGCTHTPIACDDK) is one A-14 repeat. Residues 613–636 (NACTVDSCSNSTGCVHTPLTCDDN) form an A-15 repeat. An A-16 repeat occupies 637-660 (NPCTVDSCSNSTGCCHTPINVDDH). The stretch at 661–684 (NACTEDKCTQSGGVTHTPIACDDK) is one B-7 repeat. The stretch at 685 to 708 (NACTVDSCSNSTGCCHTPLSCDDN) is one A-17 repeat. An A-18 repeat occupies 709–732 (NACTVDSCSNSTGCVHTPINVDDN). One copy of the B-8 repeat lies at 733-756 (NACTEDKCTQNGGVTHTPIACDDK). The A-19 repeat unit spans residues 757–780 (NACTVDSCSNSTGCCHTPLKCDDN). The A-20 repeat unit spans residues 781 to 804 (NPCTVDSCSNSTGCVHTPMNVDDN). A B-9 repeat occupies 805 to 828 (NACTEDKCTQNGGVTHTPIRCDDL). One copy of the A-21 repeat lies at 829 to 852 (NSCTADSCSNSTGCVHTPINCDDN). An A-22 repeat occupies 853–876 (NKCTADSCSNSTGCCHTPISCDDN). Residues 877-900 (NPCTVDSCSNSTGCCHTPINVDDN) form an A-23 repeat. The B-10 repeat unit spans residues 901-924 (NPCTEDKCTQSGGVTHTPIGCNDN). Residues 925 to 948 (NACTVDSCSNSTGCTHTPMKCDDN) form an A-24 repeat. Residues 949–971 (NPCTIDSCSNSTGCVHTPMNCDD) form an A-25 repeat. The stretch at 972–995 (GNFCTLDSCCSTGCTHTPIIIDDN) is one A-26 repeat. The stretch at 996-1019 (NPCTVDSCCNSTGVVHTPVDCNDN) is one A-27 repeat.

Its subcellular location is the secreted. It is found in the extracellular space. The protein localises to the extracellular matrix. Functionally, component of the stalk tube, the matrix that encases stalk cells. This is Prestalk protein (ecmB) from Dictyostelium discoideum (Social amoeba).